Here is a 319-residue protein sequence, read N- to C-terminus: Cobalamin biosynthesis protein CbiB (319 aa).

5 helical membrane passes run 56–76 (VMWI…LALA), 82–102 (WLGW…RSLA), 153–173 (VDGI…LAMA), 204–224 (VANY…AGLC), and 296–316 (LMWG…CWLS).

The protein belongs to the CobD/CbiB family.

It localises to the cell membrane. The protein operates within cofactor biosynthesis; adenosylcobalamin biosynthesis. Functionally, converts cobyric acid to cobinamide by the addition of aminopropanol on the F carboxylic group. However, the true cosubstrate could be (R)-1-amino-2-propanol O-2-phosphate, leading to cobinamide phosphate. This Salmonella arizonae (strain ATCC BAA-731 / CDC346-86 / RSK2980) protein is Cobalamin biosynthesis protein CbiB.